Here is a 423-residue protein sequence, read N- to C-terminus: D-tagatose-1,6-bisphosphate aldolase subunit GatZ (423 aa).

The protein belongs to the GatZ/KbaZ family. GatZ subfamily. In terms of assembly, forms a complex with GatY.

It functions in the pathway carbohydrate metabolism; D-tagatose 6-phosphate degradation; D-glyceraldehyde 3-phosphate and glycerone phosphate from D-tagatose 6-phosphate: step 2/2. Its function is as follows. Component of the tagatose-1,6-bisphosphate aldolase GatYZ that is required for full activity and stability of the Y subunit. Could have a chaperone-like function for the proper and stable folding of GatY. When expressed alone, GatZ does not show any aldolase activity. Is involved in the catabolism of galactitol. This chain is D-tagatose-1,6-bisphosphate aldolase subunit GatZ, found in Klebsiella pneumoniae subsp. pneumoniae (strain ATCC 700721 / MGH 78578).